Consider the following 396-residue polypeptide: Gap junction gamma-1 protein (396 aa).

Over 1–22 (MSWSFLTRLLEEIHNHSTFVGK) the chain is Cytoplasmic. The helical transmembrane segment at 23 to 45 (IWLTVLIVFRIVLTAVGGESIYY) threads the bilayer. The Extracellular portion of the chain corresponds to 46–75 (DEQSKFVCNTEQPGCENVCYDAFAPLSHVR). The chain crosses the membrane as a helical span at residues 76–95 (FWVFQIILVATPSVMYLGYA). The Cytoplasmic segment spans residues 96–175 (IHKIAKMEHG…RRIREDGLMK (80 aa)). The disordered stretch occupies residues 146-165 (LESEKENKDQNQSKPKHDGR). A compositionally biased stretch (basic and acidic residues) spans 147-156 (ESEKENKDQN). The chain crosses the membrane as a helical span at residues 176-198 (IYVLQLLARTVFEVGFLVGQYFL). Residues 199-228 (YGFQVHPFYVCSRLPCPHKIDCFISRPTEK) lie on the Extracellular side of the membrane. A helical transmembrane segment spans residues 229–248 (TIFLLIMYGVTGLCLLLNIW). Topologically, residues 249 to 396 (EMLHLGFGTI…SGDGKTSVWI (148 aa)) are cytoplasmic. Residues 356–396 (YNHQNNPHGSREKKAKVGSKAGSNKSSASSKSGDGKTSVWI) form a disordered region. The span at 373-396 (GSKAGSNKSSASSKSGDGKTSVWI) shows a compositional bias: low complexity.

The protein belongs to the connexin family. Gamma-type subfamily. A connexon is composed of a hexamer of connexins. Interacts with CNST.

It is found in the cell membrane. The protein resides in the cell junction. Its subcellular location is the gap junction. In terms of biological role, one gap junction consists of a cluster of closely packed pairs of transmembrane channels, the connexons, through which materials of low MW diffuse from one cell to a neighboring cell. This chain is Gap junction gamma-1 protein (GJC1), found in Bos taurus (Bovine).